A 402-amino-acid polypeptide reads, in one-letter code: Ubiquitin-like modifier-activating enzyme 5 (402 aa).

G81, D102, K125, N148, and N182 together coordinate ATP. Residues C224 and C227 each contribute to the Zn(2+) site. Residue C248 is the Glycyl thioester intermediate of the active site. Positions 301 and 306 each coordinate Zn(2+). The segment at 369-402 (EAPEKSSETSEETVTTAPPDDASLEDLMAQMKSM) is disordered.

Belongs to the ubiquitin-activating E1 family. UBA5 subfamily.

E1-like enzyme which activates UFM1. This is Ubiquitin-like modifier-activating enzyme 5 from Drosophila erecta (Fruit fly).